The following is a 533-amino-acid chain: UDP-glucuronosyltransferase 1A1 (533 aa).

A signal peptide spans 1–25; the sequence is MAVESQGGRPLVLGLLLCVLGPVVS. N-linked (GlcNAc...) asparagine glycans are attached at residues Asn102, Asn295, and Asn347. Residues 491 to 507 form a helical membrane-spanning segment; that stretch reads VIGFLLAVVLTVAFITF.

This sequence belongs to the UDP-glycosyltransferase family. As to quaternary structure, homodimer. Homooligomer. Interacts with UGT1A3, UGT1A4, UGT1A6, UGT1A7, UGT1A8, UGT1A9 and UGT1A10 to form heterodimers. Isoform 1 interacts with isoform 2/i2 suggesting that oligomerization is involved in negative regulation of transferase activity by isoform 2. Isoform 1 also interacts with respective i2 isoforms of UGT1A3, UGT1A4, UGT1A6, UGT1A7, UGT1A8, UGT1A9 and UGT1A10. As to expression, expressed in liver, colon and small intestine. Not expressed in kidney, esophagus and skin. In terms of tissue distribution, expressed in liver, colon, small intestine and kidney. Not expressed in esophagus and skin.

Its subcellular location is the endoplasmic reticulum membrane. It is found in the cytoplasm. It localises to the perinuclear region. The catalysed reaction is glucuronate acceptor + UDP-alpha-D-glucuronate = acceptor beta-D-glucuronoside + UDP + H(+). It carries out the reaction 17beta-estradiol + UDP-alpha-D-glucuronate = 17beta-estradiol 3-O-(beta-D-glucuronate) + UDP + H(+). The enzyme catalyses 2-hydroxyestrone + UDP-alpha-D-glucuronate = 2-hydroxyestrone 3-O-(beta-D-glucuronate) + UDP + H(+). It catalyses the reaction 2-hydroxy-17beta-estradiol + UDP-alpha-D-glucuronate = 2-hydroxy-17beta-estradiol 3-O-(beta-D-glucuronate) + UDP + H(+). The catalysed reaction is 2-methoxy-17beta-estradiol + UDP-alpha-D-glucuronate = 2-methoxy-17beta-estradiol 3-O-(beta-D-glucuronate) + UDP + H(+). It carries out the reaction 17alpha-estradiol + UDP-alpha-D-glucuronate = 17alpha-estradiol 3-O-(beta-D-glucuronate) + UDP + H(+). The enzyme catalyses 16beta,17beta-estriol + UDP-alpha-D-glucuronate = 16beta,17beta-estriol 16-O-(beta-D-glucuronate) + UDP + H(+). It catalyses the reaction losartan + UDP-alpha-D-glucuronate = losartan-2-N-beta-D-glucuronide + UDP. The catalysed reaction is prunetin + UDP-alpha-D-glucuronate = prunetin-4'-O-beta-D-glucuronide + UDP. It carries out the reaction SN-38 + UDP-alpha-D-glucuronate = SN-38 O-beta-D-glucuronide + UDP + H(+). The enzyme catalyses (4Z,15Z)-bilirubin IXalpha + UDP-alpha-D-glucuronate = (4Z,15Z)-bilirubin IXalpha C12-beta-D-glucuronoside + UDP. It catalyses the reaction (4Z,15Z)-bilirubin IXalpha + UDP-alpha-D-glucuronate = (4Z,15Z)-bilirubin IXalpha C8-beta-D-glucuronoside + UDP. The catalysed reaction is (4Z,15Z)-bilirubin IXalpha C8-beta-D-glucuronoside + UDP-alpha-D-glucuronate = (4Z,15Z)-bilirubin IXalpha C8,C12-beta-D-bisglucuronoside + UDP. It carries out the reaction (4Z,15Z)-bilirubin IXalpha C12-beta-D-glucuronoside + UDP-alpha-D-glucuronate = (4Z,15Z)-bilirubin IXalpha C8,C12-beta-D-bisglucuronoside + UDP. The enzyme catalyses 8-iso-prostaglandin F2alpha + UDP-alpha-D-glucuronate = 8-iso-prostaglandin F2alpha-glucuronide + UDP + H(+). It catalyses the reaction (5Z,8Z,11Z,14Z)-eicosatetraenoate + UDP-alpha-D-glucuronate = O-[(5Z),(8Z),(11Z),(14Z)-eicosatetraenoyl]-beta-D-glucuronate + UDP. The catalysed reaction is 15-hydroxy-(5Z,8Z,11Z,13E)-eicosatetraenoate + UDP-alpha-D-glucuronate = 15-O-(beta-D-glucuronosyl)-(5Z,8Z,11Z,14Z)-eicosatetraenoate + UDP + H(+). It carries out the reaction 20-hydroxy-(5Z,8Z,11Z,14Z)-eicosatetraenoate + UDP-alpha-D-glucuronate = 20-O-(beta-D-glucuronosyl)-(5Z,8Z,11Z,14Z)-eicosatetraenoate + UDP + H(+). The enzyme catalyses prostaglandin B1 + UDP-alpha-D-glucuronate = 15-O-(beta-D-glucuronosyl)-prostaglandin B1 + UDP + H(+). It catalyses the reaction (E)-ferulate + UDP-alpha-D-glucuronate = (E)-4-O-(beta-D-glucuronosyl)-ferulate + UDP + H(+). The catalysed reaction is (E)-ferulate + UDP-alpha-D-glucuronate = (E)-ferulic acid beta-D-glucuronate ester + UDP. In terms of biological role, UDP-glucuronosyltransferase (UGT) that catalyzes phase II biotransformation reactions in which lipophilic substrates are conjugated with glucuronic acid to increase the metabolite's water solubility, thereby facilitating excretion into either the urine or bile. Essential for the elimination and detoxification of drugs, xenobiotics and endogenous compounds. Catalyzes the glucuronidation of endogenous estrogen hormones such as estradiol, estrone and estriol. Involved in the glucuronidation of bilirubin, a degradation product occurring in the normal catabolic pathway that breaks down heme in vertebrates. Involved in the glucuronidation of arachidonic acid (AA) and AA-derived eicosanoids including 15-HETE, 20-HETE, PGB1 and F2-isoprostane (8-iso-PGF2alpha). Involved in the glucuronidation of the phytochemical ferulic acid at the phenolic or the carboxylic acid group. Also catalyzes the glucuronidation the isoflavones genistein, daidzein, glycitein, formononetin, biochanin A and prunetin, which are phytoestrogens with anticancer and cardiovascular properties. Involved in the glucuronidation of the AGTR1 angiotensin receptor antagonist losartan, a drug which can inhibit the effect of angiotensin II. Involved in the biotransformation of 7-ethyl-10-hydroxycamptothecin (SN-38), the pharmacologically active metabolite of the anticancer drug irinotecan. Lacks UGT glucuronidation activity but acts as a negative regulator of isoform 1. This is UDP-glucuronosyltransferase 1A1 from Homo sapiens (Human).